The following is a 906-amino-acid chain: Coatomer subunit beta' (906 aa).

WD repeat units lie at residues 13-52 (ARSD…LVKT), 55-94 (VCDL…RVHM), 97-136 (AHSD…SCSQ), 140-180 (GHTH…PNFT), 183-224 (GHEK…CVQT), 227-266 (GHAQ…LEST), 350-388 (SCEI…NKSF), and 390-425 (SAQE…KSFK). K627 bears the N6-acetyllysine mark. Residues 746-783 (IRTGRLPEAAFLARTYLPSQVSRVVKLWRENLSKVNQK) form a WD 9 repeat. A disordered region spans residues 837 to 872 (EEAKGFQPSRSAAQQELDGKPASPTPVIVTSQTANK). S859 is subject to Phosphoserine. T861 carries the post-translational modification Phosphothreonine. Positions 866–891 (TSQTANKEEKSLLELEVDLDNLEIED) form a coiled coil.

This sequence belongs to the WD repeat COPB2 family. As to quaternary structure, oligomeric complex that consists of at least the alpha, beta, beta', gamma, delta, epsilon and zeta subunits. Probably interacts with PEX11A. Interacts with SCYL1. Interacts with JAGN1.

The protein localises to the cytoplasm. It localises to the cytosol. The protein resides in the golgi apparatus membrane. It is found in the cytoplasmic vesicle. Its subcellular location is the COPI-coated vesicle membrane. In terms of biological role, the coatomer is a cytosolic protein complex that binds to dilysine motifs and reversibly associates with Golgi non-clathrin-coated vesicles, which further mediate biosynthetic protein transport from the ER, via the Golgi up to the trans Golgi network. Coatomer complex is required for budding from Golgi membranes, and is essential for the retrograde Golgi-to-ER transport of dilysine-tagged proteins. In mammals, the coatomer can only be recruited by membranes associated to ADP-ribosylation factors (ARFs), which are small GTP-binding proteins; the complex also influences the Golgi structural integrity, as well as the processing, activity, and endocytic recycling of LDL receptors. Its function is as follows. This coatomer complex protein, essential for Golgi budding and vesicular trafficking, is a selective binding protein (RACK) for protein kinase C, epsilon type. It binds to Golgi membranes in a GTP-dependent manner. This chain is Coatomer subunit beta' (COPB2), found in Bos taurus (Bovine).